A 450-amino-acid chain; its full sequence is Carbamoyl phosphate synthase arginine-specific small chain (450 aa).

The transit peptide at 1–29 directs the protein to the mitochondrion; sequence MFAARLFKAMPARASAFPSVNASIQSRFM. In terms of domain architecture, Glutamine amidotransferase type-1 spans 220–407; that stretch reads HVAVIDCGVK…LDSVRKYKAS (188 aa). Cys-296 serves as the catalytic Nucleophile. Catalysis depends on residues His-380 and Glu-382.

It belongs to the CarA family. As to quaternary structure, heterodimer composed of 2 chains; the small (or glutamine) chain promotes the hydrolysis of glutamine to ammonia, which is used by the large (or ammonia) chain to synthesize carbamoyl phosphate.

Its subcellular location is the mitochondrion matrix. It carries out the reaction hydrogencarbonate + L-glutamine + 2 ATP + H2O = carbamoyl phosphate + L-glutamate + 2 ADP + phosphate + 2 H(+). The enzyme catalyses L-glutamine + H2O = L-glutamate + NH4(+). Its pathway is amino-acid biosynthesis; L-arginine biosynthesis; carbamoyl phosphate from bicarbonate: step 1/1. In terms of biological role, small subunit of the arginine-specific carbamoyl phosphate synthase (CPSase). CPSase catalyzes the formation of carbamoyl phosphate from the ammonia moiety of glutamine, carbonate, and phosphate donated by ATP, the first step of the arginine biosynthetic pathway. The small subunit (glutamine amidotransferase) binds and cleaves glutamine to supply the large subunit with the substrate ammonia. This is Carbamoyl phosphate synthase arginine-specific small chain (cpa1) from Aspergillus oryzae (strain ATCC 42149 / RIB 40) (Yellow koji mold).